The primary structure comprises 108 residues: Small ribosomal subunit protein eS25 (108 aa).

The segment at 1-36 (MAPKKAQAPPPSSKPAKSGGGKQKKKKWSKGKQKEK) is disordered. Residues 22 to 31 (KQKKKKWSKG) are compositionally biased toward basic residues.

This sequence belongs to the eukaryotic ribosomal protein eS25 family.

The protein is Small ribosomal subunit protein eS25 (RPS25) of Solanum lycopersicum (Tomato).